Consider the following 78-residue polypeptide: Sec-independent protein translocase protein TatA (78 aa).

Residues 1–21 traverse the membrane as a helical segment; that stretch reads MGGISIWQLLIIAVIVVLLFG. The span at 47-59 shows a compositional bias: basic and acidic residues; it reads ESEKKDADFEPKS. The disordered stretch occupies residues 47–78; that stretch reads ESEKKDADFEPKSLEQQNKQAATESKKDKEQA. Residues 60–69 are compositionally biased toward polar residues; sequence LEQQNKQAAT.

This sequence belongs to the TatA/E family. As to quaternary structure, the Tat system comprises two distinct complexes: a TatABC complex, containing multiple copies of TatA, TatB and TatC subunits, and a separate TatA complex, containing only TatA subunits. Substrates initially bind to the TatABC complex, which probably triggers association of the separate TatA complex to form the active translocon.

The protein resides in the cell inner membrane. In terms of biological role, part of the twin-arginine translocation (Tat) system that transports large folded proteins containing a characteristic twin-arginine motif in their signal peptide across membranes. TatA could form the protein-conducting channel of the Tat system. The sequence is that of Sec-independent protein translocase protein TatA from Vibrio vulnificus (strain YJ016).